The primary structure comprises 1202 residues: MAFKSFIYSKGYHRSAAQKKTATSFFDSSYQYLRQNQGLVNSDPVLHASHLHPHPVVVANVNYNNVDDILHPHDLDSSINNTNNPLTHEELLYNQNVSLRSLKQQQSTNYVNNNNNNQHRYYSTGPTLPTNQYDPLNFSNRNFQDLSLKTSQPSVQQPQNEYSLLKDENAPVWKEDTEPCLNKSTYLQTHIDEINRCYEQKNYNKINSLYQSLKRNDIVPPLEIFTKVLDSLCKRPLDNNDLDNKMYELLTCYQDMINNRLKPPDEIYNIVLLSLFKGSILAYQFENPNGSDFYKIAIELFNTTTNDPKQKSVVKFRNFSKDVLDYNLLAMNIYPGHITLSKAQQVIKSSPAFIKDSFYFIACFSYAKLTNDKFAIKELYEDFRLSLSSGSPDQGLFDDQFEIYSVILSSFIETGEVELATNLLDDLVSKIQSSNGLASNISLLLSSFLISMSKVDPSKAYEIWFKFHNLNWIPEFSYEFYLVFMANSFQDWNLTKKIYDYIFPMERNLSPLKKQKLSDYLLHPIGVDSITTSLLDYSLQLKDNEVIMKILEESIVKNFSFDIGIYPFVFNYLREIQCGEDYLMRFIESHAEFIKKSNSINKFQFLNMIVDNFQSQSLLNKISHAKFFKNFVEDFNLENCELVSYNGLISCINNFIKIPKTIKDFPYILEIHAILVTKLFDFDTYPILQNGNNEVLLKFRDQIEHQFKMLAQNFCRLNLDPNLLAGVVSQAMKMVNLDDTANGQDLLNFFNHPGDWDKSYPLSLGSFIRNSPRGGIREFTKLSKEGYCFDYDTYKELIIKRAINKQIIDKCLEVCPDSIELKNIVNLMISKIPGRNLTQLIINNPKFSKVFVPNLRNDSMLKLIENCESLSNFIRICDFPEKFKSIAIQAENKNAIELIYERLFDGGKYADILRYNNIVPVLNLELLLKSCIRSGEFKKYESLSKKFNDKISESSKIDIQLEYLINKNDLKGAFTLFEKTPRELRTPHKTMDLYTFALFLDSFNRNITYYESPENTLQFANILSSQTSFINLLSTYNLIAHSDHLMNFNVGGMAAKVKKEILNQMLNNLYDSIRLLSPSIENDKSMKEKLREKVKNYCRFKAYLKSPELDMDELKTLVSVESFLNPFTPSMLFNNLIETIYINEHASSLVLQNGLIYSLQQKGLNKILSYLEESFITSGNDANIEKVREFRSLLRKSKPLQA.

A mitochondrion-targeting transit peptide spans 1-122 (MAFKSFIYSK…NNNNNQHRYY (122 aa)). The interval 109 to 134 (NYVNNNNNNQHRYYSTGPTLPTNQYD) is disordered. The segment covering 118–134 (QHRYYSTGPTLPTNQYD) has biased composition (polar residues).

Consists of an RNA moiety (RPM1) and the protein component (RPM2). Both are necessary for full enzymatic activity.

The protein resides in the mitochondrion. It carries out the reaction Endonucleolytic cleavage of RNA, removing 5'-extranucleotides from tRNA precursor.. Functionally, ribonuclease P generates mature tRNA molecules by cleaving their 5'-ends. The polypeptide is Ribonuclease P protein component, mitochondrial (RPM2) (Saccharomyces cerevisiae (strain ATCC 204508 / S288c) (Baker's yeast)).